Consider the following 1385-residue polypeptide: Kinesin-like protein KIF15 (1385 aa).

The tract at residues 1–24 (MAPGCKSELRNVTNSHSNQPSNED) is disordered. The span at 10-21 (RNVTNSHSNQPS) shows a compositional bias: polar residues. Residues 26 to 363 (AIKVFVRIRP…LNFAQRAKLI (338 aa)) form the Kinesin motor domain. 109-116 (GQTGSGKT) provides a ligand contact to ATP. A coiled-coil region spans residues 368 to 1385 (VVNEDTQGNV…NVFLKERKKE (1018 aa)). The residue at position 1007 (Lys1007) is an N6-acetyllysine. Residues Ser1139 and Ser1167 each carry the phosphoserine modification. Residues 1222–1243 (DMKRQGESSSQSRPDSQQLKNE) are disordered. A compositionally biased stretch (polar residues) spans 1228-1241 (ESSSQSRPDSQQLK).

It belongs to the TRAFAC class myosin-kinesin ATPase superfamily. Kinesin family. KLP2 subfamily. Interacts with MKI67 and TPX2. In terms of tissue distribution, expressed in sympathetic neurons.

The protein localises to the cytoplasm. It localises to the cytoskeleton. Its subcellular location is the spindle. Its function is as follows. Plus-end directed kinesin-like motor enzyme involved in mitotic spindle assembly. In Rattus norvegicus (Rat), this protein is Kinesin-like protein KIF15 (Kif15).